A 1182-amino-acid polypeptide reads, in one-letter code: DNA-directed RNA polymerase subunit beta (1182 aa).

This sequence belongs to the RNA polymerase beta chain family. In terms of assembly, the RNAP catalytic core consists of 2 alpha, 1 beta, 1 beta' and 1 omega subunit. When a sigma factor is associated with the core the holoenzyme is formed, which can initiate transcription.

It catalyses the reaction RNA(n) + a ribonucleoside 5'-triphosphate = RNA(n+1) + diphosphate. DNA-dependent RNA polymerase catalyzes the transcription of DNA into RNA using the four ribonucleoside triphosphates as substrates. In Fervidobacterium nodosum (strain ATCC 35602 / DSM 5306 / Rt17-B1), this protein is DNA-directed RNA polymerase subunit beta.